Here is a 463-residue protein sequence, read N- to C-terminus: Cysteine--tRNA ligase (463 aa).

Residue Cys27 participates in Zn(2+) binding. The short motif at 29–39 (PTVYGLIHIGN) is the 'HIGH' region element. Positions 207, 232, and 236 each coordinate Zn(2+). Residues 264 to 268 (KMSKS) carry the 'KMSKS' region motif. Position 267 (Lys267) interacts with ATP.

Belongs to the class-I aminoacyl-tRNA synthetase family. Monomer. The cofactor is Zn(2+).

It localises to the cytoplasm. It catalyses the reaction tRNA(Cys) + L-cysteine + ATP = L-cysteinyl-tRNA(Cys) + AMP + diphosphate. In Pseudothermotoga lettingae (strain ATCC BAA-301 / DSM 14385 / NBRC 107922 / TMO) (Thermotoga lettingae), this protein is Cysteine--tRNA ligase.